A 285-amino-acid polypeptide reads, in one-letter code: MSTNTESSSYSSLPSQRLLGKVALITGGATGIGESIVRLFHKHGAKVCIVDLQDDLGGEVCKSLLRGESKETAFFIHGDVRVEDDISNAVDFAVKNFGTLDILINNAGLCGAPCPDIRNYSLSEFEMTFDVNVKGAFLSMKHAARVMIPEKKGSIVSLCSVGGVVGGVGPHSYVGSKHAVLGLTRSVAAELGQHGIRVNCVSPYAVATKLALAHLPEEERTEDAFVGFRNFAAANANLKGVELTVDDVANAVLFLASDDSRYISGDNLMIDGGFTCTNHSFKVFR.

S2 carries the post-translational modification N-acetylserine.

Belongs to the short-chain dehydrogenases/reductases (SDR) family. As to expression, predominantly in roots and stems, and at lower levels in leaves and seeds.

The protein resides in the cytoplasm. It catalyses the reaction 2-cis,4-trans-xanthoxin + NAD(+) = 2-cis-(+)-abscisic aldehyde + NADH + H(+). The catalysed reaction is 2-trans,4-trans-xanthoxin + NAD(+) = 2-trans-(+)-abscisic aldehyde + NADH + H(+). Functionally, involved in the biosynthesis of abscisic acid. Catalyzes the conversion of xanthoxin to abscisic aldehyde. The chain is Xanthoxin dehydrogenase from Arabidopsis thaliana (Mouse-ear cress).